A 498-amino-acid chain; its full sequence is Glutamate--tRNA ligase (498 aa).

A 'HIGH' region motif is present at residues 11 to 21 (PSPTGHLHIGN). Residues 261–265 (KLSKR) carry the 'KMSKS' region motif. Lys-264 contributes to the ATP binding site.

Belongs to the class-I aminoacyl-tRNA synthetase family. Glutamate--tRNA ligase type 1 subfamily. Monomer.

Its subcellular location is the cytoplasm. The enzyme catalyses tRNA(Glu) + L-glutamate + ATP = L-glutamyl-tRNA(Glu) + AMP + diphosphate. Catalyzes the attachment of glutamate to tRNA(Glu) in a two-step reaction: glutamate is first activated by ATP to form Glu-AMP and then transferred to the acceptor end of tRNA(Glu). The polypeptide is Glutamate--tRNA ligase (Oenococcus oeni (strain ATCC BAA-331 / PSU-1)).